Consider the following 835-residue polypeptide: Leucine--tRNA ligase (835 aa).

Residues 36–46 carry the 'HIGH' region motif; sequence PYPSGKIHVGH. The short motif at 602–606 is the 'KMSKS' region element; the sequence is KMSKS. An ATP-binding site is contributed by lysine 605.

This sequence belongs to the class-I aminoacyl-tRNA synthetase family.

Its subcellular location is the cytoplasm. The catalysed reaction is tRNA(Leu) + L-leucine + ATP = L-leucyl-tRNA(Leu) + AMP + diphosphate. The protein is Leucine--tRNA ligase of Rickettsia felis (strain ATCC VR-1525 / URRWXCal2) (Rickettsia azadi).